The sequence spans 621 residues: Very-long-chain aldehyde decarbonylase GL1-5 (621 aa).

Transmembrane regions (helical) follow at residues Ile-99 to Leu-119, Gly-126 to His-146, Leu-186 to Phe-206, Phe-224 to Thr-244, and Met-332 to Val-352. Positions Val-138–Thr-272 constitute a Fatty acid hydroxylase domain.

Belongs to the sterol desaturase family. In terms of assembly, homodimer.

It is found in the endoplasmic reticulum membrane. It catalyses the reaction a long-chain fatty aldehyde + 2 NADPH + O2 + H(+) = a long-chain alkane + formate + 2 NADP(+) + H2O. Functionally, aldehyde decarbonylase involved in the conversion of aldehydes to alkanes. Core component of a very-long-chain alkane synthesis complex. This chain is Very-long-chain aldehyde decarbonylase GL1-5, found in Oryza sativa subsp. indica (Rice).